A 429-amino-acid polypeptide reads, in one-letter code: Enolase (429 aa).

Q162 provides a ligand contact to (2R)-2-phosphoglycerate. E204 functions as the Proton donor in the catalytic mechanism. Residues D241, E283, and D310 each contribute to the Mg(2+) site. (2R)-2-phosphoglycerate is bound by residues K335, R364, S365, and K386. Residue K335 is the Proton acceptor of the active site.

The protein belongs to the enolase family. It depends on Mg(2+) as a cofactor.

It localises to the cytoplasm. The protein localises to the secreted. The protein resides in the cell surface. It catalyses the reaction (2R)-2-phosphoglycerate = phosphoenolpyruvate + H2O. It functions in the pathway carbohydrate degradation; glycolysis; pyruvate from D-glyceraldehyde 3-phosphate: step 4/5. In terms of biological role, catalyzes the reversible conversion of 2-phosphoglycerate (2-PG) into phosphoenolpyruvate (PEP). It is essential for the degradation of carbohydrates via glycolysis. The chain is Enolase from Mycobacterium bovis (strain BCG / Pasteur 1173P2).